Here is a 240-residue protein sequence, read N- to C-terminus: Ribosomal RNA small subunit methyltransferase G (240 aa).

Residues Gly79, Phe84, 130-131, and Arg149 contribute to the S-adenosyl-L-methionine site; that span reads AE.

Belongs to the methyltransferase superfamily. RNA methyltransferase RsmG family.

The protein resides in the cytoplasm. Specifically methylates the N7 position of a guanine in 16S rRNA. This is Ribosomal RNA small subunit methyltransferase G from Lactobacillus helveticus (strain DPC 4571).